Reading from the N-terminus, the 660-residue chain is Polycomb protein SCMH1 (660 aa).

MBT repeat units lie at residues F28–P126 and S134–P235. A disordered region spans residues Q233–D345. Basic residues-rich tracts occupy residues R273 to T284 and F305 to R320. Positions P330–P343 are enriched in low complexity. The region spanning W593–G658 is the SAM domain.

This sequence belongs to the SCM family. As to quaternary structure, interacts with the SAM domain of PHC1 via its SAM domain in vitro. Associates with a PRC1-like complex. As to expression, strongly expressed in heart, muscle and pancreas. Weakly expressed in brain, placenta, lung, liver and kidney.

It localises to the nucleus. Associates with Polycomb group (PcG) multiprotein complexes; the complex class is required to maintain the transcriptionally repressive state of some genes. The sequence is that of Polycomb protein SCMH1 from Homo sapiens (Human).